Reading from the N-terminus, the 514-residue chain is 2,3-bisphosphoglycerate-independent phosphoglycerate mutase (514 aa).

2 residues coordinate Mn(2+): Asp12 and Ser62. The Phosphoserine intermediate role is filled by Ser62. Residues His123, 153 to 154 (RD), Arg185, Arg191, 260 to 263 (RPDR), and Lys335 contribute to the substrate site. Positions 402, 406, 443, 444, and 462 each coordinate Mn(2+).

This sequence belongs to the BPG-independent phosphoglycerate mutase family. As to quaternary structure, monomer. It depends on Mn(2+) as a cofactor.

It carries out the reaction (2R)-2-phosphoglycerate = (2R)-3-phosphoglycerate. It functions in the pathway carbohydrate degradation; glycolysis; pyruvate from D-glyceraldehyde 3-phosphate: step 3/5. Functionally, catalyzes the interconversion of 2-phosphoglycerate and 3-phosphoglycerate. The sequence is that of 2,3-bisphosphoglycerate-independent phosphoglycerate mutase from Lachnoclostridium phytofermentans (strain ATCC 700394 / DSM 18823 / ISDg) (Clostridium phytofermentans).